The chain runs to 81 residues: Exodeoxyribonuclease 7 small subunit (81 aa).

Positions M61–D81 are disordered.

It belongs to the XseB family. As to quaternary structure, heterooligomer composed of large and small subunits.

It localises to the cytoplasm. It catalyses the reaction Exonucleolytic cleavage in either 5'- to 3'- or 3'- to 5'-direction to yield nucleoside 5'-phosphates.. Functionally, bidirectionally degrades single-stranded DNA into large acid-insoluble oligonucleotides, which are then degraded further into small acid-soluble oligonucleotides. The protein is Exodeoxyribonuclease 7 small subunit of Levilactobacillus brevis (strain ATCC 367 / BCRC 12310 / CIP 105137 / JCM 1170 / LMG 11437 / NCIMB 947 / NCTC 947) (Lactobacillus brevis).